A 67-amino-acid polypeptide reads, in one-letter code: Large ribosomal subunit protein bL32 (67 aa).

The disordered stretch occupies residues 1 to 44 (MAVQQNRKSPSKRDMRRSHDALGFSTLSTDSKSGERHRRHHVTK). Over residues 11–20 (SKRDMRRSHD) the composition is skewed to basic and acidic residues.

The protein belongs to the bacterial ribosomal protein bL32 family.

The chain is Large ribosomal subunit protein bL32 from Dichelobacter nodosus (strain VCS1703A).